Consider the following 70-residue polypeptide: Large ribosomal subunit protein bL31 (70 aa).

The Zn(2+) site is built by Cys-16, Cys-18, Cys-37, and Cys-40.

Belongs to the bacterial ribosomal protein bL31 family. Type A subfamily. As to quaternary structure, part of the 50S ribosomal subunit. It depends on Zn(2+) as a cofactor.

In terms of biological role, binds the 23S rRNA. The sequence is that of Large ribosomal subunit protein bL31 from Psychromonas ingrahamii (strain DSM 17664 / CCUG 51855 / 37).